Reading from the N-terminus, the 763-residue chain is Forkhead box protein M1 (763 aa).

Residues 1–53 (MKTSPRRPLILKRRRLPLPVQNAPSETSEEEPKRSPAQQESNQAEASKEVAES) are disordered. Positions 36 to 45 (PAQQESNQAE) are enriched in polar residues. Glycyl lysine isopeptide (Lys-Gly) (interchain with G-Cter in SUMO2) cross-links involve residues Lys-163, Lys-201, and Lys-325. Positions 198-232 (RSIKQEMEEKENCHLEQRQVKVEEPSRPSASWQNS) are disordered. The span at 200–223 (IKQEMEEKENCHLEQRQVKVEEPS) shows a compositional bias: basic and acidic residues. Positions 235–327 (ERPPYSYMAM…LTLDQVFKPL (93 aa)) form a DNA-binding region, fork-head. Residues 329–351 (PGSPQLPEHLESQQKRPNPELRR) form a disordered region. Residue Ser-331 is modified to Phosphoserine. The segment covering 336–351 (EHLESQQKRPNPELRR) has biased composition (basic and acidic residues). Lys-356 is covalently cross-linked (Glycyl lysine isopeptide (Lys-Gly) (interchain with G-Cter in SUMO2)). A Phosphoserine; by CHEK2 modification is found at Ser-376. Residues Lys-422 and Lys-440 each participate in a glycyl lysine isopeptide (Lys-Gly) (interchain with G-Cter in SUMO2) cross-link. A disordered region spans residues 482–711 (PPLEEWPSPA…PGSPEPQVSG (230 aa)). Ser-489 bears the Phosphoserine; by GSK3 mark. Residues 494 to 503 (FKEESSHSWE) show a composition bias toward basic and acidic residues. Ser-522 bears the Phosphoserine mark. A compositionally biased stretch (polar residues) spans 583–592 (DPASQLSYSQ). Thr-611 is subject to Phosphothreonine; by CDK1. Phosphothreonine occurs at positions 620, 627, and 662. A Phosphoserine; by CDK1 modification is found at Ser-693. Ser-730 and Ser-739 each carry phosphoserine; by PLK1.

Interacts with PINT87aa which is encoded by the circular form of the long non-coding RNA LINC-PINT; the interaction inhibits FOXM1-mediated transcription of PHB2. Post-translationally, phosphorylated in M (mitotic) phase. Phosphorylation by the checkpoint kinase CHEK2 in response to DNA damage increases the FOXM1 protein stability probably stimulating the transcription of genes involved in DNA repair. Phosphorylated by CDK1 in late S and G2 phases, creating docking sites for the POLO box domains of PLK1. Subsequently, PLK1 binds and phosphorylates FOXM1, leading to activation of transcriptional activity and subsequent enhanced expression of key mitotic regulators. Phosphorylated by GSK3B leading to ubiquitination and proteasomal degradation. Ubiquitinated in a FBXW7-dependent manner leading to proteasomal degradation. Expressed in thymus, testis, small intestine, colon followed by ovary. Appears to be expressed only in adult organs containing proliferating/cycling cells or in response to growth factors. Also expressed in epithelial cell lines derived from tumors. Not expressed in resting cells. Isoform 2 is highly expressed in testis.

It localises to the nucleus. Transcription factor regulating the expression of cell cycle genes essential for DNA replication and mitosis. Plays a role in the control of cell proliferation. Also plays a role in DNA break repair, participating in the DNA damage checkpoint response. Promotes transcription of PHB2. The protein is Forkhead box protein M1 (FOXM1) of Homo sapiens (Human).